Reading from the N-terminus, the 290-residue chain is Porphobilinogen deaminase (290 aa).

Cys-237 carries the S-(dipyrrolylmethanemethyl)cysteine modification.

This sequence belongs to the HMBS family. As to quaternary structure, monomer. Requires dipyrromethane as cofactor.

It catalyses the reaction 4 porphobilinogen + H2O = hydroxymethylbilane + 4 NH4(+). It participates in porphyrin-containing compound metabolism; protoporphyrin-IX biosynthesis; coproporphyrinogen-III from 5-aminolevulinate: step 2/4. Its function is as follows. Tetrapolymerization of the monopyrrole PBG into the hydroxymethylbilane pre-uroporphyrinogen in several discrete steps. This chain is Porphobilinogen deaminase, found in Clostridium botulinum (strain ATCC 19397 / Type A).